The sequence spans 430 residues: tRNA(Ile)-lysidine synthase (430 aa).

ATP is bound at residue 21–26 (SGGLDS).

The protein belongs to the tRNA(Ile)-lysidine synthase family.

It is found in the cytoplasm. It carries out the reaction cytidine(34) in tRNA(Ile2) + L-lysine + ATP = lysidine(34) in tRNA(Ile2) + AMP + diphosphate + H(+). In terms of biological role, ligates lysine onto the cytidine present at position 34 of the AUA codon-specific tRNA(Ile) that contains the anticodon CAU, in an ATP-dependent manner. Cytidine is converted to lysidine, thus changing the amino acid specificity of the tRNA from methionine to isoleucine. This chain is tRNA(Ile)-lysidine synthase, found in Salmonella newport (strain SL254).